A 260-amino-acid polypeptide reads, in one-letter code: Proteasome subunit alpha 1 (260 aa).

Residues 237–260 (AEADLLDTGEDADDEAEDEDATEE) are disordered. Residues 240 to 260 (DLLDTGEDADDEAEDEDATEE) are compositionally biased toward acidic residues.

This sequence belongs to the peptidase T1A family. As to quaternary structure, the 20S proteasome core is composed of 14 alpha and 14 beta subunits that assemble into four stacked heptameric rings, resulting in a barrel-shaped structure. The two inner rings, each composed of seven catalytic beta subunits, are sandwiched by two outer rings, each composed of seven alpha subunits. The catalytic chamber with the active sites is on the inside of the barrel. Has a gated structure, the ends of the cylinder being occluded by the N-termini of the alpha-subunits. Is capped at one or both ends by the proteasome regulatory ATPase, PAN.

It is found in the cytoplasm. Its activity is regulated as follows. The formation of the proteasomal ATPase PAN-20S proteasome complex, via the docking of the C-termini of PAN into the intersubunit pockets in the alpha-rings, triggers opening of the gate for substrate entry. Interconversion between the open-gate and close-gate conformations leads to a dynamic regulation of the 20S proteasome proteolysis activity. Its function is as follows. Component of the proteasome core, a large protease complex with broad specificity involved in protein degradation. This chain is Proteasome subunit alpha 1, found in Haloarcula marismortui (strain ATCC 43049 / DSM 3752 / JCM 8966 / VKM B-1809) (Halobacterium marismortui).